We begin with the raw amino-acid sequence, 347 residues long: Spermidine/putrescine import ATP-binding protein PotA (347 aa).

The region spanning 6 to 236 is the ABC transporter domain; that stretch reads IEIKNVYKEF…PKNAFVAKFI (231 aa). Position 38–45 (38–45) interacts with ATP; sequence GPSGCGKT.

The protein belongs to the ABC transporter superfamily. Spermidine/putrescine importer (TC 3.A.1.11.1) family. In terms of assembly, the complex is composed of two ATP-binding proteins (PotA), two transmembrane proteins (PotB and PotC) and a solute-binding protein (PotD).

It is found in the cell membrane. The catalysed reaction is ATP + H2O + polyamine-[polyamine-binding protein]Side 1 = ADP + phosphate + polyamineSide 2 + [polyamine-binding protein]Side 1.. Part of the ABC transporter complex PotABCD involved in spermidine/putrescine import. Responsible for energy coupling to the transport system. The chain is Spermidine/putrescine import ATP-binding protein PotA from Clostridium novyi (strain NT).